Here is a 465-residue protein sequence, read N- to C-terminus: Ribulose bisphosphate carboxylase large chain (465 aa).

Lysine 4 is subject to N6,N6,N6-trimethyllysine. Residues asparagine 113 and threonine 163 each contribute to the substrate site. Lysine 165 functions as the Proton acceptor in the catalytic mechanism. Lysine 167 lines the substrate pocket. Residues lysine 191, aspartate 193, and glutamate 194 each coordinate Mg(2+). The residue at position 191 (lysine 191) is an N6-carboxylysine. Histidine 284 serves as the catalytic Proton acceptor. Residues arginine 285, histidine 317, and serine 369 each contribute to the substrate site.

The protein belongs to the RuBisCO large chain family. Type I subfamily. As to quaternary structure, heterohexadecamer of 8 large chains and 8 small chains; disulfide-linked. The disulfide link is formed within the large subunit homodimers. Mg(2+) serves as cofactor. The disulfide bond which can form in the large chain dimeric partners within the hexadecamer appears to be associated with oxidative stress and protein turnover.

The protein localises to the plastid. Its subcellular location is the chloroplast. The enzyme catalyses 2 (2R)-3-phosphoglycerate + 2 H(+) = D-ribulose 1,5-bisphosphate + CO2 + H2O. It carries out the reaction D-ribulose 1,5-bisphosphate + O2 = 2-phosphoglycolate + (2R)-3-phosphoglycerate + 2 H(+). In terms of biological role, ruBisCO catalyzes two reactions: the carboxylation of D-ribulose 1,5-bisphosphate, the primary event in carbon dioxide fixation, as well as the oxidative fragmentation of the pentose substrate in the photorespiration process. Both reactions occur simultaneously and in competition at the same active site. This is Ribulose bisphosphate carboxylase large chain from Casuarina equisetifolia (Beach she-oak).